The sequence spans 216 residues: Probable disulfide bond formation protein D (216 aa).

An N-terminal signal peptide occupies residues Met1–Ala25. Cysteines 65 and 68 form a disulfide.

This sequence belongs to the thioredoxin family. DsbA subfamily.

In terms of biological role, may be required for disulfide bond formation in some proteins. This is Probable disulfide bond formation protein D (bdbD) from Bacillus cereus (strain ATCC 14579 / DSM 31 / CCUG 7414 / JCM 2152 / NBRC 15305 / NCIMB 9373 / NCTC 2599 / NRRL B-3711).